An 858-amino-acid polypeptide reads, in one-letter code: Beta-galactosidase 6 (858 aa).

The N-terminal stretch at 1-30 is a signal peptide; sequence MAAATVGVLLRLLLLPVVVVVSLLVGASRA. An N-linked (GlcNAc...) asparagine glycan is attached at asparagine 32. Glutamate 189 functions as the Proton donor in the catalytic mechanism. Glutamate 258 functions as the Nucleophile in the catalytic mechanism. Asparagine 259, asparagine 482, asparagine 507, asparagine 595, and asparagine 830 each carry an N-linked (GlcNAc...) asparagine glycan. Residues 772-858 form the SUEL-type lectin domain; the sequence is QTQGPALRLE…KSLVVEAACS (87 aa).

This sequence belongs to the glycosyl hydrolase 35 family.

The protein localises to the secreted. It is found in the extracellular space. The protein resides in the apoplast. It catalyses the reaction Hydrolysis of terminal non-reducing beta-D-galactose residues in beta-D-galactosides.. Functionally, releases galactose by hydrolysis of plant cell wall galactose-containing polysaccharides such as galacto-xyloglucan, pectic galactan and galactan (in vitro). This chain is Beta-galactosidase 6, found in Oryza sativa subsp. japonica (Rice).